The sequence spans 293 residues: Thiamine-monophosphate kinase (293 aa).

Residues Glu25, Val39, Asp40, Asp68, and Asp113 each coordinate Mg(2+). ATP contacts are provided by residues 112 to 113 and Arg136; that span reads GD. Asp194 lines the Mg(2+) pocket. Ser196 lines the ATP pocket. Position 197 (Asp197) interacts with Mg(2+). Substrate-binding residues include Glu243 and Trp286.

It belongs to the thiamine-monophosphate kinase family. Homodimer.

It catalyses the reaction thiamine phosphate + ATP = thiamine diphosphate + ADP. The protein operates within cofactor biosynthesis; thiamine diphosphate biosynthesis; thiamine diphosphate from thiamine phosphate: step 1/1. Is inhibited by AMP; the mode of AMP inhibition is uncompetitive for both TMP and ATP. Functionally, catalyzes the ATP-dependent phosphorylation of thiamine-monophosphate (TMP) to form thiamine-pyrophosphate (TPP), the active form of vitamin B1. In Pyrobaculum calidifontis (strain DSM 21063 / JCM 11548 / VA1), this protein is Thiamine-monophosphate kinase.